A 588-amino-acid chain; its full sequence is Vicilin C72 (588 aa).

The N-terminal stretch at 1 to 25 (MVRNKSACVVLLFSLFLSFGLLCSA) is a signal peptide. Disordered regions lie at residues 159–183 (REREEEAEEEETEEGEQEQSHNPFH) and 460–487 (PRQSSFEEEEEQQQEQEQEEERRSGQYR). Residues 163–175 (EEAEEEETEEGEQ) are compositionally biased toward acidic residues. 2 consecutive Cupin type-1 domains span residues 182-340 (FHFH…EQLD) and 386-566 (FNLL…RLVD). The segment covering 465-478 (FEEEEEQQQEQEQE) has biased composition (acidic residues).

The protein belongs to the 7S seed storage protein family.

Its subcellular location is the vacuole. The protein resides in the aleurone grain. Functionally, seed storage protein. This is Vicilin C72 from Gossypium hirsutum (Upland cotton).